A 447-amino-acid chain; its full sequence is tRNA-2-methylthio-N(6)-dimethylallyladenosine synthase (447 aa).

Positions 10 to 128 constitute an MTTase N-terminal domain; that stretch reads KLFCISTYGC…FPEYLHRVLQ (119 aa). Residues C19, C55, C89, C165, C169, and C172 each contribute to the [4Fe-4S] cluster site. The 232-residue stretch at 151-382 folds into the Radical SAM core domain; it reads RKSDVKAFVT…EAINKKVVIK (232 aa). Positions 384-447 constitute a TRAM domain; the sequence is KEYEGKVVEV…PFSLIGEIVE (64 aa).

It belongs to the methylthiotransferase family. MiaB subfamily. In terms of assembly, monomer. [4Fe-4S] cluster serves as cofactor.

It is found in the cytoplasm. The enzyme catalyses N(6)-dimethylallyladenosine(37) in tRNA + (sulfur carrier)-SH + AH2 + 2 S-adenosyl-L-methionine = 2-methylsulfanyl-N(6)-dimethylallyladenosine(37) in tRNA + (sulfur carrier)-H + 5'-deoxyadenosine + L-methionine + A + S-adenosyl-L-homocysteine + 2 H(+). Catalyzes the methylthiolation of N6-(dimethylallyl)adenosine (i(6)A), leading to the formation of 2-methylthio-N6-(dimethylallyl)adenosine (ms(2)i(6)A) at position 37 in tRNAs that read codons beginning with uridine. In Clostridium perfringens (strain ATCC 13124 / DSM 756 / JCM 1290 / NCIMB 6125 / NCTC 8237 / Type A), this protein is tRNA-2-methylthio-N(6)-dimethylallyladenosine synthase.